Consider the following 430-residue polypeptide: Asparagine--tRNA ligase (430 aa).

It belongs to the class-II aminoacyl-tRNA synthetase family. As to quaternary structure, homodimer.

The protein localises to the cytoplasm. It catalyses the reaction tRNA(Asn) + L-asparagine + ATP = L-asparaginyl-tRNA(Asn) + AMP + diphosphate + H(+). The protein is Asparagine--tRNA ligase of Staphylococcus aureus (strain bovine RF122 / ET3-1).